The following is a 71-amino-acid chain: Peptide Ctri9819 (71 aa).

A signal peptide spans 1 to 23 (MKTVSTVAILAIFLLIVITTIET). Position 34 is a leucine amide (leucine 34). Positions 38–71 (SKLETFKRIARTLSAGISAKRSLEDVNSLTGMSS) are excised as a propeptide.

The protein belongs to the non-disulfide-bridged peptide (NDBP) superfamily. Short antimicrobial peptide (group 4) family. Expressed by the venom gland.

Its subcellular location is the secreted. Antimicrobial peptide. The chain is Peptide Ctri9819 from Chaerilus tricostatus (Scorpion).